A 462-amino-acid chain; its full sequence is ATP synthase subunit beta (462 aa).

Residue 152–159 (GGAGVGKT) participates in ATP binding.

The protein belongs to the ATPase alpha/beta chains family. F-type ATPases have 2 components, CF(1) - the catalytic core - and CF(0) - the membrane proton channel. CF(1) has five subunits: alpha(3), beta(3), gamma(1), delta(1), epsilon(1). CF(0) has three main subunits: a(1), b(2) and c(9-12). The alpha and beta chains form an alternating ring which encloses part of the gamma chain. CF(1) is attached to CF(0) by a central stalk formed by the gamma and epsilon chains, while a peripheral stalk is formed by the delta and b chains.

The protein localises to the cell inner membrane. It catalyses the reaction ATP + H2O + 4 H(+)(in) = ADP + phosphate + 5 H(+)(out). Its function is as follows. Produces ATP from ADP in the presence of a proton gradient across the membrane. The catalytic sites are hosted primarily by the beta subunits. The chain is ATP synthase subunit beta from Shewanella amazonensis (strain ATCC BAA-1098 / SB2B).